Consider the following 134-residue polypeptide: uncharacterized protein (134 aa).

The segment at 1–30 (MGTLQGAALRSRERPSWPQETHGHRERTEE) is disordered. Over residues 10 to 30 (RSRERPSWPQETHGHRERTEE) the composition is skewed to basic and acidic residues.

This is an uncharacterized protein from Homo sapiens (Human).